Here is a 103-residue protein sequence, read N- to C-terminus: Trp operon repressor homolog (103 aa).

A DNA-binding region spans residues 62-85 (QRKISELLGVGVATITRGSNELKH).

This sequence belongs to the TrpR family. As to quaternary structure, homodimer.

Its subcellular location is the cytoplasm. In terms of biological role, this protein is an aporepressor. When complexed with L-tryptophan it binds the operator region of the trp operon and prevents the initiation of transcription. The sequence is that of Trp operon repressor homolog from Photobacterium profundum (strain SS9).